A 549-amino-acid chain; its full sequence is MKRPKLKKASKRMTCHKRYKIQKKVREHHRKLRKEAKKRGHKKPRKDPGVPNSAPFKEALLREAELRKQRLEELKQQQKLDRQKELEKKRKLETNPDIKPSNVEPMEKEFGLCKTENKAKSGKQNSKKLYCQELKKVIEASDVVLEVLDARDPLGCRCPQVEEAIVQSGQKKLVLILNKSDLVPKENLESWLNYLKKELPTVVFRASTKPKDKGKITKRVKAKKNAAPFRSEVCFGKEGLWKLLGGFQETCSKAIRVGVIGFPNVGKSSIINSLKQEQMCNVGVSMGLTRSMQVVPLDKQITIIDSPSFIVSPLNSSSALALRSPASIEVVKPMEAASAILSQADARQVVLKYTVPGYRNSLEFFTVLAQRRGMHQKGGIPNVEGAAKLLWSEWTGASLAYYCHPPTSWTPPPYFNESIVVDMKSGFNLEELEKNNAQSIRAIKGPHLANSILFQSSGLTNGIIEEKDIHEELPKRKERKQEEREDDKDSDQETVDEEVDENSSGMFAAEETGEALSEETTAGEQSTRSFILDKIIEEDDAYDFSTDYV.

Basic residues predominate over residues 1–45 (MKRPKLKKASKRMTCHKRYKIQKKVREHHRKLRKEAKKRGHKKPR). Disordered stretches follow at residues 1 to 56 (MKRP…SAPF) and 73 to 104 (ELKQ…SNVE). The tract at residues 2–46 (KRPKLKKASKRMTCHKRYKIQKKVREHHRKLRKEAKKRGHKKPRK) is basic. Positions 56–95 (FKEALLREAELRKQRLEELKQQQKLDRQKELEKKRKLETN) form a coiled coil. Residues 73–96 (ELKQQQKLDRQKELEKKRKLETNP) show a composition bias toward basic and acidic residues. K79 bears the N6-acetyllysine mark. Residues K91 and K99 each participate in a glycyl lysine isopeptide (Lys-Gly) (interchain with G-Cter in SUMO2) cross-link. The residue at position 101 (S101) is a Phosphoserine. Glycyl lysine isopeptide (Lys-Gly) (interchain with G-Cter in SUMO2) cross-links involve residues K114, K179, K196, K253, K267, and K275. The region spanning 131 to 312 (CQELKKVIEA…IIDSPSFIVS (182 aa)) is the CP-type G domain. 178-181 (NKSD) serves as a coordination point for GTP. Residue 261–268 (GFPNVGKS) participates in GTP binding. An intermediate region spans residues 282-456 (VGVSMGLTRS…HLANSILFQS (175 aa)). 305-308 (DSPS) contributes to the GTP binding site. An acidic region spans residues 465–543 (EEKDIHEELP…KIIEEDDAYD (79 aa)). Positions 474 to 483 (PKRKERKQEE) are enriched in basic and acidic residues. Positions 474–532 (PKRKERKQEEREDDKDSDQETVDEEVDENSSGMFAAEETGEALSEETTAGEQSTRSFIL) are disordered. The span at 484–501 (REDDKDSDQETVDEEVDE) shows a compositional bias: acidic residues. S490, S504, S517, and S529 each carry phosphoserine. Over residues 518–529 (EETTAGEQSTRS) the composition is skewed to polar residues.

The protein belongs to the TRAFAC class YlqF/YawG GTPase family. As to quaternary structure, interacts with MDM2; this interaction stabilizes MDM2. Interaction with MDM2 occurs in the nucleoplasm and is triggered by a nucleolar release mechanism, such as mitosis-induced nucleolar disassembly. Indirectly interacts with TP53, via MDM2-binding. Interacts with TSC22D1 isoform 2. As to expression, increased levels in lung tissue in cancer patients.

It localises to the nucleus. The protein localises to the nucleolus. In terms of biological role, may be required to maintain the proliferative capacity of stem cells. Stabilizes MDM2 by preventing its ubiquitination, and hence proteasomal degradation. The chain is Guanine nucleotide-binding protein-like 3 (GNL3) from Homo sapiens (Human).